We begin with the raw amino-acid sequence, 166 residues long: Small ribosomal subunit protein uS5 (166 aa).

The region spanning Leu-11–Ile-74 is the S5 DRBM domain.

It belongs to the universal ribosomal protein uS5 family. Part of the 30S ribosomal subunit. Contacts proteins S4 and S8.

Functionally, with S4 and S12 plays an important role in translational accuracy. Located at the back of the 30S subunit body where it stabilizes the conformation of the head with respect to the body. This Aliivibrio fischeri (strain ATCC 700601 / ES114) (Vibrio fischeri) protein is Small ribosomal subunit protein uS5.